The following is a 592-amino-acid chain: Inactive metallocarboxypeptidase ecm14 (592 aa).

A signal peptide spans 1–22 (MYRQDHVFVVLCAVLLAGQVTA). The propeptide occupies 23–175 (VPAGTGINPH…AIYESRYPTR (153 aa)). In terms of domain architecture, Peptidase M14 spans 203–524 (HYQPFNVILQ…NSVLVLGHFL (322 aa)). Zn(2+)-binding residues include His-267 and Glu-270. Substrate-binding positions include 267-270 (HARE), Arg-325, and 342-343 (DR). A disulfide bond links Cys-336 and Cys-359. N-linked (GlcNAc...) asparagine glycosylation occurs at Asn-383. His-399 is a Zn(2+) binding site. Residue 400-401 (SY) participates in substrate binding. The N-linked (GlcNAc...) asparagine glycan is linked to Asn-548.

The protein belongs to the peptidase M14 family. The cofactor is Zn(2+).

It localises to the vacuole. Its subcellular location is the secreted. Inactive carboxypeptidase that may play a role in cell wall organization and biogenesis. The protein is Inactive metallocarboxypeptidase ecm14 (ecm14) of Talaromyces stipitatus (strain ATCC 10500 / CBS 375.48 / QM 6759 / NRRL 1006) (Penicillium stipitatum).